A 383-amino-acid polypeptide reads, in one-letter code: L-lactate dehydrogenase (383 aa).

One can recognise an FMN hydroxy acid dehydrogenase domain in the interval 1-380 (MIISSGNDYR…NADCLVQAIK (380 aa)). Position 24 (Tyr-24) interacts with substrate. Residues Ser-106 and Gln-127 each contribute to the FMN site. Position 129 (Tyr-129) interacts with substrate. Thr-155 serves as a coordination point for FMN. Arg-164 lines the substrate pocket. Lys-251 contributes to the FMN binding site. The Proton acceptor role is filled by His-275. Arg-278 contributes to the substrate binding site. FMN is bound at residue 306 to 330 (DSGIRNGLDVVRMLALGADTVLLGR).

This sequence belongs to the FMN-dependent alpha-hydroxy acid dehydrogenase family. The cofactor is FMN.

Its subcellular location is the cell inner membrane. The enzyme catalyses (S)-lactate + A = pyruvate + AH2. In terms of biological role, catalyzes the conversion of L-lactate to pyruvate. Is coupled to the respiratory chain. The chain is L-lactate dehydrogenase from Acinetobacter baumannii (strain AB307-0294).